The sequence spans 361 residues: Phosphate acyltransferase (361 aa).

The protein belongs to the PlsX family. In terms of assembly, homodimer. Probably interacts with PlsY.

Its subcellular location is the cytoplasm. The catalysed reaction is a fatty acyl-[ACP] + phosphate = an acyl phosphate + holo-[ACP]. The protein operates within lipid metabolism; phospholipid metabolism. Catalyzes the reversible formation of acyl-phosphate (acyl-PO(4)) from acyl-[acyl-carrier-protein] (acyl-ACP). This enzyme utilizes acyl-ACP as fatty acyl donor, but not acyl-CoA. The sequence is that of Phosphate acyltransferase from Anaeromyxobacter dehalogenans (strain 2CP-C).